The following is a 226-amino-acid chain: UPF0758 protein SE_1336 (226 aa).

The 123-residue stretch at 102 to 224 (QITHPSDVAS…FTSLVEAGYF (123 aa)) folds into the MPN domain. Zn(2+) contacts are provided by His173, His175, and Asp186. A JAMM motif motif is present at residues 173–186 (HNHPSGDVTPSKED).

It belongs to the UPF0758 family.

In Staphylococcus epidermidis (strain ATCC 12228 / FDA PCI 1200), this protein is UPF0758 protein SE_1336.